The following is a 739-amino-acid chain: Lysine decarboxylase (739 aa).

Residue Lys367 is modified to N6-(pyridoxal phosphate)lysine. A compositionally biased stretch (basic and acidic residues) spans Ala714–Lys726. The tract at residues Ala714 to Ser739 is disordered. The span at Ala728–Ser739 shows a compositional bias: basic residues.

It belongs to the Orn/Lys/Arg decarboxylase class-I family. Pyridoxal 5'-phosphate is required as a cofactor.

Its subcellular location is the cytoplasm. It carries out the reaction L-lysine + H(+) = cadaverine + CO2. The protein is Lysine decarboxylase of Hafnia alvei.